The primary structure comprises 168 residues: MTRKKRRLYMLGLALLGLGTATALTLSAFEENIVFFYSPSDLVVQPPGDRSVRLGGLVEDGSVQKQADGLTITFRVTDTANTVPVTYKGIVPDLFREGQGVVAEGRMGGDGVFVAREVLARHDENYMPPEVHDALQRAGAVKTEVPGRSIYTPADSDDKVHATTTLKP.

Residues 1-7 are Cytoplasmic-facing; sequence MTRKKRR. Residues 8-28 form a helical; Signal-anchor for type II membrane protein membrane-spanning segment; the sequence is LYMLGLALLGLGTATALTLSA. The Periplasmic portion of the chain corresponds to 29–168; the sequence is FEENIVFFYS…KVHATTTLKP (140 aa). Residues His122 and Tyr126 each coordinate heme. The interval 149–168 is disordered; that stretch reads SIYTPADSDDKVHATTTLKP.

Belongs to the CcmE/CycJ family.

It is found in the cell inner membrane. Its function is as follows. Heme chaperone required for the biogenesis of c-type cytochromes. Transiently binds heme delivered by CcmC and transfers the heme to apo-cytochromes in a process facilitated by CcmF and CcmH. The polypeptide is Cytochrome c-type biogenesis protein CcmE (Rhodospirillum centenum (strain ATCC 51521 / SW)).